The primary structure comprises 469 residues: D-3-phosphoglycerate dehydrogenase 1 (469 aa).

Residues serine 22, serine 29, and serine 33 each carry the phosphoserine modification. Residues 208–209 (HI), aspartate 228, 285–287 (ASR), and aspartate 311 contribute to the NAD(+) site. Arginine 287 is an active-site residue. Glutamate 316 is a catalytic residue. Histidine 347 functions as the Proton donor in the catalytic mechanism. 347–350 (HIGG) is a binding site for NAD(+). The 71-residue stretch at 399 to 469 (RVLYIHQNVP…SAKISIRLLY (71 aa)) folds into the ACT domain.

Belongs to the D-isomer specific 2-hydroxyacid dehydrogenase family.

The enzyme catalyses (2R)-3-phosphoglycerate + NAD(+) = 3-phosphooxypyruvate + NADH + H(+). The catalysed reaction is (R)-2-hydroxyglutarate + NAD(+) = 2-oxoglutarate + NADH + H(+). Its pathway is amino-acid biosynthesis; L-serine biosynthesis; L-serine from 3-phospho-D-glycerate: step 1/3. In terms of biological role, catalyzes the reversible oxidation of 3-phospho-D-glycerate to 3-phosphonooxypyruvate, the first step of the phosphorylated L-serine biosynthesis pathway. Also catalyzes the reversible oxidation of 2-hydroxyglutarate to 2-oxoglutarate. This chain is D-3-phosphoglycerate dehydrogenase 1 (SER3), found in Saccharomyces cerevisiae (strain ATCC 204508 / S288c) (Baker's yeast).